Reading from the N-terminus, the 319-residue chain is Transcription elongation factor A protein 1 (319 aa).

Residues 1–78 (MQEIIKCREQ…DKWKQDIEGT (78 aa)) form the TFIIS N-terminal domain. A compositionally biased stretch (low complexity) spans 78–106 (TSATTTSSSSSSSSSTTSTTTTKTASPSE). The disordered stretch occupies residues 78–146 (TSATTTSSSS…TTPKTSSPPI (69 aa)). A compositionally biased stretch (basic and acidic residues) spans 107–122 (SLKRKSISEDTSDRPT). The segment covering 133-146 (ISPPTTPKTSSPPI) has biased composition (low complexity). The 113-residue stretch at 160 to 272 (LRNKTIQLFV…ASMLGQNNEA (113 aa)) folds into the TFIIS central domain. A TFIIS-type zinc finger spans residues 275–317 (DQFQCGKCKQRKCTYTQLQTRSADEPPTTFVKCCVKGCGNRWR). The Zn(2+) site is built by cysteine 279, cysteine 282, cysteine 307, and cysteine 312.

The protein belongs to the TFS-II family.

The protein localises to the nucleus. In terms of biological role, necessary for efficient RNA polymerase II transcription elongation past template-encoded arresting sites. The arresting sites in DNA have the property of trapping a certain fraction of elongating RNA polymerases that pass through, resulting in locked ternary complexes. Cleavage of the nascent transcript by S-II allows the resumption of elongation from the new 3'-terminus. The chain is Transcription elongation factor A protein 1 (tcea1) from Dictyostelium discoideum (Social amoeba).